Consider the following 228-residue polypeptide: Ribosomal RNA small subunit methyltransferase G (228 aa).

S-adenosyl-L-methionine contacts are provided by residues glycine 70, leucine 75, 120-121 (AE), and arginine 138. The interval 207–228 (RRGDTRGPNRRVSPRRTGGAPA) is disordered.

Belongs to the methyltransferase superfamily. RNA methyltransferase RsmG family.

Its subcellular location is the cytoplasm. Specifically methylates the N7 position of guanine in position 518 of 16S rRNA. This chain is Ribosomal RNA small subunit methyltransferase G, found in Mycobacterium marinum (strain ATCC BAA-535 / M).